The following is a 485-amino-acid chain: NADH-quinone oxidoreductase subunit N (485 aa).

14 helical membrane-spanning segments follow: residues 8–28 (LIALLPLLIVGLTVVVVMLSI), 35–55 (FLNATLSVIGLNAALVSLWFV), 71–91 (GFAMLYTGLVLLASLATCTFA), 105–125 (FYLLVLIASLGGILLANANHL), 127–147 (ALFLGIELISLPLFGLIGYAF), 159–179 (YTILSAAASSFLLFGMALVYA), 203–223 (LLAGFGLMIVGLGFKLSLAPF), 235–255 (PAPVSTFLATASKIAIFGVVM), 271–291 (VVLGIIAFASIIFGNLMALSQ), 297–317 (LLGYSSISHLGYLLVALIALQ), 326–346 (VGVYLAGYLFSSLGAFGVVSL), 373–393 (AAVMTVMMLSLAGIPMTLGFI), 408–430 (WWLVAAVVVGSAIGLYYYLRVAV), and 455–475 (IVVLISALLVLVLGVWPQPLI).

It belongs to the complex I subunit 2 family. NDH-1 is composed of 13 different subunits. Subunits NuoA, H, J, K, L, M, N constitute the membrane sector of the complex.

Its subcellular location is the cell inner membrane. It catalyses the reaction a quinone + NADH + 5 H(+)(in) = a quinol + NAD(+) + 4 H(+)(out). In terms of biological role, NDH-1 shuttles electrons from NADH, via FMN and iron-sulfur (Fe-S) centers, to quinones in the respiratory chain. The immediate electron acceptor for the enzyme in this species is believed to be ubiquinone. Couples the redox reaction to proton translocation (for every two electrons transferred, four hydrogen ions are translocated across the cytoplasmic membrane), and thus conserves the redox energy in a proton gradient. This chain is NADH-quinone oxidoreductase subunit N, found in Salmonella paratyphi C (strain RKS4594).